The primary structure comprises 236 residues: uncharacterized protein (236 aa).

The helical transmembrane segment at 15–34 (GGMAHIISEAVIAGSIGLYF) threads the bilayer. Residues 36-71 (KKISALEQTVQELQSQLEVQNNQLQWLIQQQTRRLA) adopt a coiled-coil conformation. Disordered stretches follow at residues 83 to 113 (SPLPPQRDYRQQSTTTNAAGNNGAYPSFQFK) and 185 to 236 (ATTQ…IDCE). 2 stretches are compositionally biased toward polar residues: residues 93–102 (QQSTTTNAAG) and 185–195 (ATTQVSTFSKP). Residues 225–236 (ALDKILNDIDCE) are compositionally biased toward basic and acidic residues.

Its subcellular location is the membrane. This is an uncharacterized protein from Aedes vexans (Inland floodwater mosquito).